Here is a 443-residue protein sequence, read N- to C-terminus: Glucose-6-phosphate isomerase (443 aa).

Catalysis depends on Glu285, which acts as the Proton donor. Catalysis depends on residues His306 and Lys420.

The protein belongs to the GPI family.

The protein localises to the cytoplasm. It carries out the reaction alpha-D-glucose 6-phosphate = beta-D-fructose 6-phosphate. It functions in the pathway carbohydrate biosynthesis; gluconeogenesis. The protein operates within carbohydrate degradation; glycolysis; D-glyceraldehyde 3-phosphate and glycerone phosphate from D-glucose: step 2/4. Catalyzes the reversible isomerization of glucose-6-phosphate to fructose-6-phosphate. The sequence is that of Glucose-6-phosphate isomerase from Staphylococcus aureus (strain USA300).